The chain runs to 357 residues: sn-glycerol-3-phosphate import ATP-binding protein UgpC (357 aa).

The region spanning 4-235 (LKLQAVTKSY…PASLFVASFI (232 aa)) is the ABC transporter domain. 37 to 44 (GPSGCGKS) contributes to the ATP binding site.

Belongs to the ABC transporter superfamily. sn-glycerol-3-phosphate importer (TC 3.A.1.1.3) family. As to quaternary structure, the complex is composed of two ATP-binding proteins (UgpC), two transmembrane proteins (UgpA and UgpE) and a solute-binding protein (UgpB).

The protein localises to the cell inner membrane. It catalyses the reaction sn-glycerol 3-phosphate(out) + ATP + H2O = sn-glycerol 3-phosphate(in) + ADP + phosphate + H(+). Its function is as follows. Part of the ABC transporter complex UgpBAEC involved in sn-glycerol-3-phosphate (G3P) import. Responsible for energy coupling to the transport system. This Yersinia pseudotuberculosis serotype I (strain IP32953) protein is sn-glycerol-3-phosphate import ATP-binding protein UgpC.